Here is a 97-residue protein sequence, read N- to C-terminus: Protein SENESCENCE-ASSOCIATED GENE 21, mitochondrial (97 aa).

The N-terminal 46 residues, 1–46 (MARSISNVKIVSAFVSRELSNAIFRRGYAATAAQGSVSSGGRSGAV), are a transit peptide targeting the mitochondrion.

It belongs to the LEA type 3 family. In terms of tissue distribution, expressed in roots, stems leaves and flowers, but not in seeds. In short days, observed in cotyledons and roots but absent from rosette leaves.

The protein localises to the mitochondrion. In terms of biological role, mediates tolerance to oxidative stresses (e.g. hydrogen peroxide H(2)O(2), diamide, menadione and tert-butyl hydroperoxide) by minimizing the negative effects of oxidation and monitoring photosynthesis during stress. Promotes root development. Prevents premature aging (e.g. senescence and flowering). Involved in resistance against compatible pathogens such as Botrytis cinerea and Pseudomonas syringae pv. tomato. This chain is Protein SENESCENCE-ASSOCIATED GENE 21, mitochondrial, found in Arabidopsis thaliana (Mouse-ear cress).